The following is a 310-amino-acid chain: Ribosomal RNA small subunit methyltransferase H (310 aa).

Residues 33-35 (AGH), D53, F79, D100, and Q107 each bind S-adenosyl-L-methionine.

It belongs to the methyltransferase superfamily. RsmH family.

It localises to the cytoplasm. The enzyme catalyses cytidine(1402) in 16S rRNA + S-adenosyl-L-methionine = N(4)-methylcytidine(1402) in 16S rRNA + S-adenosyl-L-homocysteine + H(+). In terms of biological role, specifically methylates the N4 position of cytidine in position 1402 (C1402) of 16S rRNA. This chain is Ribosomal RNA small subunit methyltransferase H, found in Clostridium beijerinckii (strain ATCC 51743 / NCIMB 8052) (Clostridium acetobutylicum).